The chain runs to 132 residues: Large ribosomal subunit protein bL17 (132 aa).

It belongs to the bacterial ribosomal protein bL17 family. In terms of assembly, part of the 50S ribosomal subunit. Contacts protein L32.

This chain is Large ribosomal subunit protein bL17, found in Ehrlichia canis (strain Jake).